Here is a 486-residue protein sequence, read N- to C-terminus: Protein nucleotidyltransferase YdiU (486 aa).

ATP is bound by residues G90, G92, R93, K113, D125, G126, R176, and R183. D252 (proton acceptor) is an active-site residue. The Mg(2+) site is built by N253 and D262. Residue D262 participates in ATP binding.

Belongs to the SELO family. Requires Mg(2+) as cofactor. The cofactor is Mn(2+).

The enzyme catalyses L-seryl-[protein] + ATP = 3-O-(5'-adenylyl)-L-seryl-[protein] + diphosphate. It carries out the reaction L-threonyl-[protein] + ATP = 3-O-(5'-adenylyl)-L-threonyl-[protein] + diphosphate. The catalysed reaction is L-tyrosyl-[protein] + ATP = O-(5'-adenylyl)-L-tyrosyl-[protein] + diphosphate. It catalyses the reaction L-histidyl-[protein] + UTP = N(tele)-(5'-uridylyl)-L-histidyl-[protein] + diphosphate. The enzyme catalyses L-seryl-[protein] + UTP = O-(5'-uridylyl)-L-seryl-[protein] + diphosphate. It carries out the reaction L-tyrosyl-[protein] + UTP = O-(5'-uridylyl)-L-tyrosyl-[protein] + diphosphate. Its function is as follows. Nucleotidyltransferase involved in the post-translational modification of proteins. It can catalyze the addition of adenosine monophosphate (AMP) or uridine monophosphate (UMP) to a protein, resulting in modifications known as AMPylation and UMPylation. This chain is Protein nucleotidyltransferase YdiU, found in Pseudomonas aeruginosa (strain ATCC 15692 / DSM 22644 / CIP 104116 / JCM 14847 / LMG 12228 / 1C / PRS 101 / PAO1).